The primary structure comprises 631 residues: Phosphomethylpyrimidine synthase (631 aa).

Substrate-binding positions include Asn239, Met268, Tyr297, His333, Ser353 to Gly355, Asp394 to Arg397, and Glu433. His437 provides a ligand contact to Zn(2+). Tyr460 contributes to the substrate binding site. Zn(2+) is bound at residue His501. [4Fe-4S] cluster-binding residues include Cys581, Cys584, and Cys589.

This sequence belongs to the ThiC family. In terms of assembly, homodimer. It depends on [4Fe-4S] cluster as a cofactor.

It carries out the reaction 5-amino-1-(5-phospho-beta-D-ribosyl)imidazole + S-adenosyl-L-methionine = 4-amino-2-methyl-5-(phosphooxymethyl)pyrimidine + CO + 5'-deoxyadenosine + formate + L-methionine + 3 H(+). The protein operates within cofactor biosynthesis; thiamine diphosphate biosynthesis. Functionally, catalyzes the synthesis of the hydroxymethylpyrimidine phosphate (HMP-P) moiety of thiamine from aminoimidazole ribotide (AIR) in a radical S-adenosyl-L-methionine (SAM)-dependent reaction. The polypeptide is Phosphomethylpyrimidine synthase (Escherichia coli (strain 55989 / EAEC)).